The following is a 314-amino-acid chain: tRNA dimethylallyltransferase (314 aa).

12 to 19 (GPTGTGKS) lines the ATP pocket. 14–19 (TGTGKS) provides a ligand contact to substrate.

The protein belongs to the IPP transferase family. As to quaternary structure, monomer. The cofactor is Mg(2+).

It carries out the reaction adenosine(37) in tRNA + dimethylallyl diphosphate = N(6)-dimethylallyladenosine(37) in tRNA + diphosphate. Its function is as follows. Catalyzes the transfer of a dimethylallyl group onto the adenine at position 37 in tRNAs that read codons beginning with uridine, leading to the formation of N6-(dimethylallyl)adenosine (i(6)A). The polypeptide is tRNA dimethylallyltransferase (Mycolicibacterium paratuberculosis (strain ATCC BAA-968 / K-10) (Mycobacterium paratuberculosis)).